We begin with the raw amino-acid sequence, 293 residues long: 4-hydroxy-tetrahydrodipicolinate synthase (293 aa).

Residue threonine 45 coordinates pyruvate. Residue tyrosine 133 is the Proton donor/acceptor of the active site. The active-site Schiff-base intermediate with substrate is lysine 161. Isoleucine 203 serves as a coordination point for pyruvate.

This sequence belongs to the DapA family. As to quaternary structure, homotetramer; dimer of dimers.

It localises to the cytoplasm. It catalyses the reaction L-aspartate 4-semialdehyde + pyruvate = (2S,4S)-4-hydroxy-2,3,4,5-tetrahydrodipicolinate + H2O + H(+). The protein operates within amino-acid biosynthesis; L-lysine biosynthesis via DAP pathway; (S)-tetrahydrodipicolinate from L-aspartate: step 3/4. Functionally, catalyzes the condensation of (S)-aspartate-beta-semialdehyde [(S)-ASA] and pyruvate to 4-hydroxy-tetrahydrodipicolinate (HTPA). The sequence is that of 4-hydroxy-tetrahydrodipicolinate synthase from Shewanella denitrificans (strain OS217 / ATCC BAA-1090 / DSM 15013).